Reading from the N-terminus, the 209-residue chain is dTTP/UTP pyrophosphatase (209 aa).

Asp79 (proton acceptor) is an active-site residue.

The protein belongs to the Maf family. YhdE subfamily. A divalent metal cation serves as cofactor.

The protein localises to the cytoplasm. It carries out the reaction dTTP + H2O = dTMP + diphosphate + H(+). The enzyme catalyses UTP + H2O = UMP + diphosphate + H(+). Nucleoside triphosphate pyrophosphatase that hydrolyzes dTTP and UTP. May have a dual role in cell division arrest and in preventing the incorporation of modified nucleotides into cellular nucleic acids. This Chelativorans sp. (strain BNC1) protein is dTTP/UTP pyrophosphatase.